The following is a 704-amino-acid chain: Mannan-binding lectin serine protease 1 (704 aa).

The first 24 residues, Met-1–Ala-24, serve as a signal peptide directing secretion. Positions His-25–Val-143 constitute a CUB 1 domain. Residues His-25–Glu-189 form a homodimerization region. Residues His-25–Glu-189 are interaction with MBL2. Positions His-25–Leu-283 are interaction with FCN2. The tract at residues His-25–Glu-305 is interaction with MBL1. N-linked (GlcNAc...) asparagine glycosylation occurs at Asn-54. Ca(2+)-binding residues include Glu-73, Asp-81, Asp-126, Ser-128, Asp-144, Val-145, and Glu-147. Residues Cys-78 and Cys-96 are joined by a disulfide bond. The 44-residue stretch at Asp-144–Arg-187 folds into the EGF-like; calcium-binding domain. Cystine bridges form between Cys-148/Cys-162, Cys-158/Cys-171, Cys-173/Cys-186, and Cys-190/Cys-217. Asn-164, Tyr-165, and Gly-168 together coordinate Ca(2+). Asn-164 is subject to (3R)-3-hydroxyasparagine. An N-linked (GlcNAc...) asparagine glycan is attached at Asn-183. The CUB 2 domain occupies Cys-190–Ala-302. Residues Glu-240, Asp-250, Asp-287, and Ser-289 each coordinate Ca(2+). The cysteines at positions 247 and 265 are disulfide-linked. Sushi domains follow at residues Asn-304–Ile-369 and Val-370–Pro-439. 6 disulfide bridges follow: Cys-306-Cys-354, Cys-334-Cys-367, Cys-372-Cys-419, Cys-402-Cys-437, Cys-441-Cys-577, and Cys-480-Cys-496. N-linked (GlcNAc...) asparagine glycans are attached at residues Asn-390 and Asn-412. Residues Ile-454–Gly-701 form the Peptidase S1 domain. His-495 (charge relay system) is an active-site residue. N-linked (GlcNAc...) asparagine glycosylation occurs at Leu-538. The active-site Charge relay system is the Asp-557. N-linked (GlcNAc...) asparagine glycosylation is present at Glu-604. Intrachain disulfides connect Cys-619-Cys-636 and Cys-647-Cys-677. Ser-651 functions as the Charge relay system in the catalytic mechanism.

This sequence belongs to the peptidase S1 family. As to quaternary structure, homodimer. Interacts with the oligomeric lectins MBL2, FCN2 and FCN3; triggers the lectin pathway of complement through activation of C3. Interacts with SERPING1. Interacts with COLEC11; probably triggers the lectin pathway of complement. The iron and 2-oxoglutarate dependent 3-hydroxylation of aspartate and asparagine is (R) stereospecific within EGF domains. In terms of processing, N-glycosylated. Some N-linked glycan are of the complex-type. Post-translationally, autoproteolytic processing of the proenzyme produces the active enzyme composed on the heavy and the light chain held together by a disulfide bond. Isoform 1 but not isoform 2 is activated through autoproteolytic processing. As to expression, protein of the plasma which is primarily expressed by liver.

Its subcellular location is the secreted. Inhibited by SERPING1 and A2M. In terms of biological role, functions in the lectin pathway of complement, which performs a key role in innate immunity by recognizing pathogens through patterns of sugar moieties and neutralizing them. The lectin pathway is triggered upon binding of mannan-binding lectin (MBL) and ficolins to sugar moieties which leads to activation of the associated proteases MASP1 and MASP2. Functions as an endopeptidase and may activate MASP2 or C2 or directly activate C3 the key component of complement reaction. Isoform 2 may have an inhibitory effect on the activation of the lectin pathway of complement or may cleave IGFBP5. Also plays a role in development. This is Mannan-binding lectin serine protease 1 (Masp1) from Rattus norvegicus (Rat).